A 630-amino-acid chain; its full sequence is Cytochrome B pre-mRNA-processing protein 2 (630 aa).

It localises to the mitochondrion. Appears to be specifically required for the splicing of the terminal intron (bI5) of the cytochrome b pre-mRNA. Can also stimulates the splicing of the omega intron of the precursor of large ribosomal RNA. This Saccharomyces paradoxus (Yeast) protein is Cytochrome B pre-mRNA-processing protein 2 (CBP2).